We begin with the raw amino-acid sequence, 474 residues long: Phenolic acid decarboxylase (474 aa).

Mn(2+)-binding residues include Asn161, His182, and Glu224. Prenylated FMN contacts are provided by residues 161-166 and 181-182; these read NVGTYR and MH. Glu273 acts as the Proton donor in catalysis.

The protein belongs to the UbiD family. YclC subfamily. Prenylated FMN is required as a cofactor. The cofactor is Mn(2+).

The enzyme catalyses vanillate + H(+) = guaiacol + CO2. Involved in the non-oxidative decarboxylation and detoxification of phenolic derivatives under both aerobic and anaerobic conditions. Phenolic acid decarboxylase that catalyzes the reversible decarboxylation of vanillate. This chain is Phenolic acid decarboxylase, found in Streptomyces sp. (strain D7).